The primary structure comprises 138 residues: Acidic phospholipase A2 1 (138 aa).

The N-terminal stretch at 1–16 (MRTLWIMAVLLVGVDG) is a signal peptide. 7 cysteine pairs are disulfide-bonded: C42–C131, C44–C60, C59–C110, C65–C138, C66–C103, C73–C97, and C91–C101. Ca(2+) is bound by residues Y43, G45, and G47. Residue H63 is part of the active site. D64 contributes to the Ca(2+) binding site. The active site involves D104.

It belongs to the phospholipase A2 family. Group II subfamily. D49 sub-subfamily. As to quaternary structure, homodimer. It depends on Ca(2+) as a cofactor. In terms of tissue distribution, expressed by the venom gland.

Its subcellular location is the secreted. The catalysed reaction is a 1,2-diacyl-sn-glycero-3-phosphocholine + H2O = a 1-acyl-sn-glycero-3-phosphocholine + a fatty acid + H(+). In terms of biological role, snake venom phospholipase A2 (PLA2) that is highly lipolytic and myolytic. PLA2 catalyzes the calcium-dependent hydrolysis of the 2-acyl groups in 3-sn-phosphoglycerides. This Protobothrops flavoviridis (Habu) protein is Acidic phospholipase A2 1.